The primary structure comprises 179 residues: Protein TIFY 11a (179 aa).

The region spanning 62 to 97 (VDGGGQQFTIFYAGKVVVIDRCTPAMAAELMRFASA) is the Tify domain. A Jas motif is present at residues 115–140 (PIARKASLKRFLAKRKATPASARSSY). A Nuclear localization signal motif is present at residues 117–124 (ARKASLKR).

This sequence belongs to the TIFY/JAZ family. In terms of assembly, interacts with BHLH148. Interacts with COI1A in a coronatine-dependent manner. Interacts with COI1B in a coronatine-dependent manner. Coronatine is an analog of jasmonoyl isoleucine (JA-Ile). Interacts with RSS3. Forms a ternary complex with RSS3 and BHLH094 in the nucleus. Interacts with BHLH062 and NINJA1. Interacts with MYB30. Post-translationally, ubiquitinated. Targeted for degradation by the SCF(COI1) E3 ubiquitin ligase-proteasome pathway during jasmonate signaling.

It localises to the nucleus. Its function is as follows. Repressor of jasmonate (JA) responses. Forms a ternary complex with RSS3 and BHLH94 to negatively regulate JA-responsive genes. Acts as a positive regulator of tolerance to salt stress. Involved in salt tolerance by modulating potassium homeostasis through JA signaling and regulation of the expression of potassium ion transporter genes. Acts as a transcriptional regulator targeted by the SCF(COI1) E3 ubiquitin ligase complexes in the JA signaling pathway, and interacts with BHLH062 that may directly regulate the ion transporter genes. Acts as a positive regulator of tolerance to dehydration stress. Acts as a negative regulator of tolerance to cold stress by interacting with MYB30. The polypeptide is Protein TIFY 11a (Oryza sativa subsp. japonica (Rice)).